A 201-amino-acid chain; its full sequence is Histidinol dehydrogenase (201 aa).

Belongs to the histidinol dehydrogenase family. As to quaternary structure, homodimer. Requires Zn(2+) as cofactor.

The enzyme catalyses L-histidinol + 2 NAD(+) + H2O = L-histidine + 2 NADH + 3 H(+). The protein operates within amino-acid biosynthesis; L-histidine biosynthesis; L-histidine from 5-phospho-alpha-D-ribose 1-diphosphate: step 9/9. Catalyzes the sequential NAD-dependent oxidations of L-histidinol to L-histidinaldehyde and then to L-histidine. The protein is Histidinol dehydrogenase (hisD) of Buchnera aphidicola subsp. Schlechtendalia chinensis.